Here is a 932-residue protein sequence, read N- to C-terminus: MADYKDSLNLPDTAFPMRGDLPKREPQWVAQWQEKKLYQRIREICAGRPRFTLHDGPPYANGDIHIGHAVNKVLKDIIVRSKTLSGFDAPYVPGWDCHGLPIEHQIEKLHGKAIPADKVRELSRAYAAEQVERQKKDFIRLGVLGDWGNPYLTMNFSAEAGEIRALGKILEQGYLYQGLKPVNWCLDCGSALAEAEVEYEDKNSPAIDVAFEVHENHTAKLAAAFGLTHLRGPAFAVIWTTTPWTLPANEAVSVHPDLTYDLIETEKGALILVRELAEAALKRYGLEGTVAGSCTGDKLDQMLLKHPFQNRDVAIICGTHVTTEAGTGLVHTAPAHGVDDYNIGKKYGLPVNNPVGNDGKFISTTPALSVGELAGKTVWEANPQVLQELEARARLLKNERIQHSYPHCWRHKTPIIFRATTQWFIGMENKKNEDASTLRWIAERAVDETQFFPAWGRARLEGMMKTRPDWCVSRQRNWGVPIPFFLHKETGQPHPRTAELIEQVALRVEKSGIEAWFSLDAAELLGAEADQYVKMKDTLDVWFDSGTTHWHVMRGSHAADHTYPADLYLEGSDQHRGWFQSSLLSGCAIDGRAPYKGLLTHGFVVDGKGHKMSKSKGNVIAPQQVSDKMGADILRLWTASTDYSGELTISDEILKRVVEGYRRIRNTLRFLLANVSDFDAATDMLPIDQWLEIDRYALALTRELQDGCRADFDKYEFHRVVQALQTFCSEDLGGFYLDILKDRLYTTAPKSVARRSAQSALWHITQAFVRLLAPITAFTAEEVWQVLTGKADDSVMFQVWHDLPALAGEGDLLAKWALIRTARADVTKALEAQREAGKIGSALQAAVEIHCGGEKYEALASLGDDLKFVFICSSTVAVRDDNEQVIATPLEHAKCERCWHVREDVGANTEHPTLCGRCVSNLYGEGEVRGCA.

The short motif at 58 to 68 (PYANGDIHIGH) is the 'HIGH' region element. L-isoleucyl-5'-AMP is bound at residue glutamate 570. The 'KMSKS' region signature appears at 611 to 615 (KMSKS). Position 614 (lysine 614) interacts with ATP. Zn(2+)-binding residues include cysteine 895, cysteine 898, cysteine 915, and cysteine 918.

This sequence belongs to the class-I aminoacyl-tRNA synthetase family. IleS type 1 subfamily. As to quaternary structure, monomer. Zn(2+) is required as a cofactor.

It localises to the cytoplasm. The enzyme catalyses tRNA(Ile) + L-isoleucine + ATP = L-isoleucyl-tRNA(Ile) + AMP + diphosphate. In terms of biological role, catalyzes the attachment of isoleucine to tRNA(Ile). As IleRS can inadvertently accommodate and process structurally similar amino acids such as valine, to avoid such errors it has two additional distinct tRNA(Ile)-dependent editing activities. One activity is designated as 'pretransfer' editing and involves the hydrolysis of activated Val-AMP. The other activity is designated 'posttransfer' editing and involves deacylation of mischarged Val-tRNA(Ile). This Dechloromonas aromatica (strain RCB) protein is Isoleucine--tRNA ligase.